The following is a 129-amino-acid chain: UPF0344 protein USA300HOU_0928 (129 aa).

Helical transmembrane passes span 1–21, 36–56, 67–87, and 99–119; these read MLHLHILSWVLAIILFIATYL, LHMILRLFMLLTLISGFWILI, MLLTLKMLCGVAVVGLMEVSI, and MFWITIALIIITMVLGVILPL.

This sequence belongs to the UPF0344 family.

It localises to the cell membrane. This Staphylococcus aureus (strain USA300 / TCH1516) protein is UPF0344 protein USA300HOU_0928.